Reading from the N-terminus, the 448-residue chain is Probable protein phosphatase 2C 74 (448 aa).

Residues 1-48 form a disordered region; sequence MGSCLSSSGGGGSRRSLHGSPHVPGPGRRKRPPKRRPGSCSSSFDNTE. Residue G2 is the site of N-myristoyl glycine attachment. Positions 27-37 are enriched in basic residues; that stretch reads GRRKRPPKRRP. The PPM-type phosphatase domain maps to 67–384; the sequence is TVSLFSQQGK…DDCAVVCLFL (318 aa). Mn(2+)-binding residues include D103, G104, D329, and D375. Residues 401–431 are disordered; that stretch reads HINNGVTEPEPDTASSSTPDSGTGSPELNGV. The span at 412 to 426 shows a compositional bias: low complexity; the sequence is DTASSSTPDSGTGSP.

Belongs to the PP2C family. As to quaternary structure, interacts with KIN10. Mg(2+) serves as cofactor. Requires Mn(2+) as cofactor. As to expression, expressed in the whole plant.

It localises to the cell membrane. The enzyme catalyses O-phospho-L-seryl-[protein] + H2O = L-seryl-[protein] + phosphate. The catalysed reaction is O-phospho-L-threonyl-[protein] + H2O = L-threonyl-[protein] + phosphate. Acts as a protein phosphatase. The protein is Probable protein phosphatase 2C 74 of Arabidopsis thaliana (Mouse-ear cress).